Consider the following 474-residue polypeptide: UDP-N-acetylmuramate--L-alanine ligase (474 aa).

Position 108 to 114 (108 to 114 (GTHGKTT)) interacts with ATP.

This sequence belongs to the MurCDEF family.

The protein resides in the cytoplasm. The enzyme catalyses UDP-N-acetyl-alpha-D-muramate + L-alanine + ATP = UDP-N-acetyl-alpha-D-muramoyl-L-alanine + ADP + phosphate + H(+). It participates in cell wall biogenesis; peptidoglycan biosynthesis. Cell wall formation. The sequence is that of UDP-N-acetylmuramate--L-alanine ligase from Chloroflexus aggregans (strain MD-66 / DSM 9485).